The primary structure comprises 689 residues: Glycine--tRNA ligase beta subunit (689 aa).

Belongs to the class-II aminoacyl-tRNA synthetase family. As to quaternary structure, tetramer of two alpha and two beta subunits.

It is found in the cytoplasm. The enzyme catalyses tRNA(Gly) + glycine + ATP = glycyl-tRNA(Gly) + AMP + diphosphate. The protein is Glycine--tRNA ligase beta subunit of Dictyoglomus turgidum (strain DSM 6724 / Z-1310).